The chain runs to 257 residues: Flagellar brake protein YcgR 2 (257 aa).

A PilZ domain is found at Q131–T244.

It belongs to the YcgR family. Monomer. Interacts with the flagellar basal bodies.

It is found in the bacterial flagellum basal body. Its function is as follows. Acts as a flagellar brake, regulating swimming and swarming in a bis-(3'-5') cyclic diguanylic acid (c-di-GMP)-dependent manner. Binds 1 c-di-GMP dimer per subunit. Increasing levels of c-di-GMP lead to decreased motility. The polypeptide is Flagellar brake protein YcgR 2 (Paraburkholderia phytofirmans (strain DSM 17436 / LMG 22146 / PsJN) (Burkholderia phytofirmans)).